The chain runs to 388 residues: MLAELPQPQNLTLLTLNTQYVLTWDWDQTTTGNSVSFTVEYMAKYKMKMKKKNWSRVCERTTRTRCDLTGSDLHYLGMYVLRVRASADGVDSDWVNKDFCPDIDASLGPPSRAELAPVGNLLDVTISDPLTSTQHSMKEHVLFLYYRILYWSRSDDPQGLKPKVLDSSNNLVTPPELEAWAWYCVMIQSRYDYYNKTSSYTEPQCMQTEGDTPYGQIFLYFLVSMMVCFLLVLLSSYAFFRFYRGLKNTFYPSIQLPAHIQEYLCDSSPGSDMPRLITADSEAELCCDKLTICPEVVLLEIHVPPPLTAPPSELEQDSGRHIRQDSGDSGIYSTEGGSAQQGRSGGEPIRRDQEVDSWQTLEQVKMEEMGRELADERDLDEGVVDVCV.

Fibronectin type-III domains follow at residues 5–102 (LPQP…FCPD) and 109–211 (PPSR…TEGD). A helical membrane pass occupies residues 217 to 237 (IFLYFLVSMMVCFLLVLLSSY). The segment at 308 to 357 (TAPPSELEQDSGRHIRQDSGDSGIYSTEGGSAQQGRSGGEPIRRDQEVDS) is disordered. Over residues 317-326 (DSGRHIRQDS) the composition is skewed to basic and acidic residues. Over residues 331-342 (IYSTEGGSAQQG) the composition is skewed to polar residues.

This sequence belongs to the type II cytokine receptor family. Heterodimer with IFNAR2; forming the receptor for type I interferon.

Its subcellular location is the cell membrane. The protein resides in the cytoplasm. The protein localises to the perinuclear region. Together with IFNAR2, forms the heterodimeric receptor for type I interferons (including interferons alpha, beta, epsilon, omega and kappa). Type I interferon binding activates the JAK-STAT signaling cascade, resulting in transcriptional activation or repression of interferon-regulated genes that encode the effectors of the interferon response. Mechanistically, type I interferon-binding brings the IFNAR1 and IFNAR2 subunits into close proximity with one another, driving their associated Janus kinases (JAKs) (TYK2 bound to IFNAR1 and JAK1 bound to IFNAR2) to cross-phosphorylate one another. The activated kinases phosphorylate specific tyrosine residues on the intracellular domains of IFNAR1 and IFNAR2, forming docking sites for the STAT transcription factors. STAT proteins are then phosphorylated by the JAKs, promoting their translocation into the nucleus to regulate expression of interferon-regulated genes. This Oncorhynchus mykiss (Rainbow trout) protein is Interferon alpha/beta receptor 1b.